The following is a 446-amino-acid chain: Tubulin beta chain (446 aa).

Positions 11, 69, 138, 142, 143, 144, 204, and 226 each coordinate GTP. Residue Glu69 participates in Mg(2+) binding. A disordered region spans residues 423–446; it reads QQYQDATADEEEGEYEEEPAEEEQ. Acidic residues predominate over residues 429–446; sequence TADEEEGEYEEEPAEEEQ.

This sequence belongs to the tubulin family. As to quaternary structure, dimer of alpha and beta chains. A typical microtubule is a hollow water-filled tube with an outer diameter of 25 nm and an inner diameter of 15 nM. Alpha-beta heterodimers associate head-to-tail to form protofilaments running lengthwise along the microtubule wall with the beta-tubulin subunit facing the microtubule plus end conferring a structural polarity. Microtubules usually have 13 protofilaments but different protofilament numbers can be found in some organisms and specialized cells. It depends on Mg(2+) as a cofactor.

The protein resides in the cytoplasm. It is found in the cytoskeleton. Tubulin is the major constituent of microtubules, a cylinder consisting of laterally associated linear protofilaments composed of alpha- and beta-tubulin heterodimers. Microtubules grow by the addition of GTP-tubulin dimers to the microtubule end, where a stabilizing cap forms. Below the cap, tubulin dimers are in GDP-bound state, owing to GTPase activity of alpha-tubulin. This chain is Tubulin beta chain, found in Pleurotus sajor-caju (Oyster mushroom).